The chain runs to 210 residues: Vacuolar protein sorting-associated protein 28 homolog 2 (210 aa).

Residues 1–99 enclose the VPS28 N-terminal domain; the sequence is MMEVKLWNDK…VTSGLPATVE (99 aa). Residues 109 to 205 form the VPS28 C-terminal domain; it reads SNSASIVAEC…SSYNSFMAAL (97 aa).

The protein belongs to the VPS28 family. As to quaternary structure, component of the endosomal sorting required for transport complex I (ESCRT-I), composed of ELC, VPS28 and VPS37. Interacts with ELC.

The protein localises to the endosome. Functionally, component of the ESCRT-I complex (endosomal sorting complex required for transport I), a regulator of vesicular trafficking process. Required for the sorting of endocytic ubiquitinated cargos into multivesicular bodies (MVBs). Mediates the association to the ESCRT-0 complex. In Arabidopsis thaliana (Mouse-ear cress), this protein is Vacuolar protein sorting-associated protein 28 homolog 2 (VPS28-2).